We begin with the raw amino-acid sequence, 67 residues long: Phycobilisome 7.8 kDa linker polypeptide, allophycocyanin-associated, core (67 aa).

One can recognise a CpcD-like domain in the interval 1-56; that stretch reads GRLFKITACVPSQTRIRTQRELQNTYFTKLVPYENWFREQQRIQKMGGKIVKVELA.

This sequence belongs to the phycobilisome linker protein family.

It localises to the cellular thylakoid membrane. Rod linker protein, associated with allophycocyanin. Linker polypeptides determine the state of aggregation and the location of the disk-shaped phycobiliprotein units within the phycobilisome and modulate their spectroscopic properties in order to mediate a directed and optimal energy transfer. In Mastigocladus laminosus (Fischerella sp.), this protein is Phycobilisome 7.8 kDa linker polypeptide, allophycocyanin-associated, core (apcC).